The sequence spans 216 residues: Orotate phosphoribosyltransferase (216 aa).

Lys30 is a 5-phospho-alpha-D-ribose 1-diphosphate binding site. Position 38–39 (38–39 (FF)) interacts with orotate. Residues 75 to 76 (YK), Arg102, Lys103, Lys106, His108, and 128 to 136 (DDVITAGTA) contribute to the 5-phospho-alpha-D-ribose 1-diphosphate site. Orotate-binding residues include Thr132 and Arg160.

It belongs to the purine/pyrimidine phosphoribosyltransferase family. PyrE subfamily. Homodimer. The cofactor is Mg(2+).

It catalyses the reaction orotidine 5'-phosphate + diphosphate = orotate + 5-phospho-alpha-D-ribose 1-diphosphate. The protein operates within pyrimidine metabolism; UMP biosynthesis via de novo pathway; UMP from orotate: step 1/2. In terms of biological role, catalyzes the transfer of a ribosyl phosphate group from 5-phosphoribose 1-diphosphate to orotate, leading to the formation of orotidine monophosphate (OMP). This Acinetobacter baumannii (strain ACICU) protein is Orotate phosphoribosyltransferase.